A 362-amino-acid chain; its full sequence is Heme A synthase (362 aa).

5 consecutive transmembrane segments (helical) span residues 12–32 (AVKIWLGAIAALIAAMVLVGG), 102–122 (VIGLAYLLPFLWFIWRGHLGG), 128–148 (LWLIFGLGALQGAVGWWMVAS), 159–179 (ERLAIHLTLALVIFAAIVWTL), and 198–218 (AAALLALTFVQIFFGALVAGL). Residue His-262 participates in heme binding. 3 consecutive transmembrane segments (helical) span residues 264–286 (MLAYALWALAIAHAIDAVRARAG), 291–311 (GAVWFAAALTLQAALGIFTLL), and 314–334 (VPIGLALAHQAVAVLVLMLGV). His-322 contacts heme.

Belongs to the COX15/CtaA family. Type 2 subfamily. In terms of assembly, interacts with CtaB. Requires heme b as cofactor.

It localises to the cell membrane. The enzyme catalyses Fe(II)-heme o + 2 A + H2O = Fe(II)-heme a + 2 AH2. The protein operates within porphyrin-containing compound metabolism; heme A biosynthesis; heme A from heme O: step 1/1. Catalyzes the conversion of heme O to heme A by two successive hydroxylations of the methyl group at C8. The first hydroxylation forms heme I, the second hydroxylation results in an unstable dihydroxymethyl group, which spontaneously dehydrates, resulting in the formyl group of heme A. This is Heme A synthase from Rhodopseudomonas palustris (strain BisA53).